A 252-amino-acid polypeptide reads, in one-letter code: MTPLLIASDVNIFYGEKQAVCGVNLNVQRGTVNALIGPSGCGKTTFLRAINRMHDLTPGARVTGRITLDGEDIYGPRVDPVTMRRRVGMVFQKPNPFPTMSVFDNVVSGLRLAGIRDRDHLMEVAERSLRGAALWDEVKDRLKTPATGLSGGQQQRLCIARALAVEPEILLMDEPTSALDPASTARIEDLMTDLKKVTTIIIVTHNMHQAARVSDTTSFFLNGELVEHGPTEQLFTSPRDERTEAYVTGRFG.

One can recognise an ABC transporter domain in the interval 5–247; sequence LIASDVNIFY…PRDERTEAYV (243 aa). ATP is bound at residue 37–44; that stretch reads GPSGCGKT.

This sequence belongs to the ABC transporter superfamily. Phosphate importer (TC 3.A.1.7) family. As to quaternary structure, the complex is composed of two ATP-binding proteins (PstB), two transmembrane proteins (PstC and PstA) and a solute-binding protein (PstS).

The protein resides in the cell membrane. It catalyses the reaction phosphate(out) + ATP + H2O = ADP + 2 phosphate(in) + H(+). Its function is as follows. Part of the ABC transporter complex PstSACB involved in phosphate import. Responsible for energy coupling to the transport system. This chain is Phosphate import ATP-binding protein PstB, found in Deinococcus geothermalis (strain DSM 11300 / CIP 105573 / AG-3a).